The primary structure comprises 476 residues: Mitochondrial-processing peptidase subunit beta (476 aa).

Residues 1–28 (MASRRLALNLAQGVKARAGGVINPFRRG) constitute a mitochondrion transit peptide. His-84 provides a ligand contact to Zn(2+). Glu-87 acts as the Proton acceptor in catalysis. Residues His-88 and Glu-164 each contribute to the Zn(2+) site.

The protein belongs to the peptidase M16 family. As to quaternary structure, heterodimer of mpp (alpha) and pep (beta) subunits, forming the mitochondrial processing protease (MPP) in which mpp is involved in substrate recognition and binding and pep is the catalytic subunit. Component of the ubiquinol-cytochrome c oxidoreductase (cytochrome b-c1 complex, complex III, CIII), a multisubunit enzyme composed of 10 subunits. The complex is composed of 3 respiratory subunits cytochrome b (cob), cytochrome c1 (cyt-1) and Rieske protein (fes-1), 2 core protein subunits pep and ucr-1, and 5 low-molecular weight protein subunits qcr6, qcr7, qcr8, qcr9 and probably NCU16844/qcr10. The complex exists as an obligatory dimer and forms supercomplexes (SCs) in the inner mitochondrial membrane with NADH-ubiquinone oxidoreductase (complex I, CI) and cytochrome c oxidase (complex IV, CIV), resulting in different assemblies (supercomplexes SCI(1)III(2), SCIII(2)IV(1) and SCIII(2)IV(2) as well as higher order I(x)III(y)IV(z) megacomplexes). Zn(2+) is required as a cofactor.

The protein resides in the mitochondrion matrix. The protein localises to the mitochondrion inner membrane. It catalyses the reaction Release of N-terminal transit peptides from precursor proteins imported into the mitochondrion, typically with Arg in position P2.. Binding to mpp is required for catalytic activity. Inhibited by metal chelator ethylenediaminetetraacetic acid (EDTA). In terms of biological role, catalytic subunit of the essential mitochondrial processing protease (MPP), which cleaves the mitochondrial sequence off newly imported precursors proteins. Preferentially, cleaves after an arginine at position P2. Component of the ubiquinol-cytochrome c oxidoreductase, a multisubunit transmembrane complex that is part of the mitochondrial electron transport chain which drives oxidative phosphorylation. The respiratory chain contains 3 multisubunit complexes succinate dehydrogenase (complex II, CII), ubiquinol-cytochrome c oxidoreductase (cytochrome b-c1 complex, complex III, CIII) and cytochrome c oxidase (complex IV, CIV), that cooperate to transfer electrons derived from NADH and succinate to molecular oxygen, creating an electrochemical gradient over the inner membrane that drives transmembrane transport and the ATP synthase. The cytochrome b-c1 complex catalyzes electron transfer from ubiquinol to cytochrome c, linking this redox reaction to translocation of protons across the mitochondrial inner membrane, with protons being carried across the membrane as hydrogens on the quinol. In the process called Q cycle, 2 protons are consumed from the matrix, 4 protons are released into the intermembrane space and 2 electrons are passed to cytochrome c. This Neurospora crassa (strain ATCC 24698 / 74-OR23-1A / CBS 708.71 / DSM 1257 / FGSC 987) protein is Mitochondrial-processing peptidase subunit beta.